The primary structure comprises 492 residues: Probable beta-1,4-xylosyltransferase IRX14H (492 aa).

Topologically, residues 1–33 (MKLSVFRLSYWNRRGSSFRSSPSLDPSFDGKSP) are cytoplasmic. A helical; Signal-anchor for type II membrane protein membrane pass occupies residues 34–54 (SSVFWFVIHGLCCLISLILGF). The Lumenal portion of the chain corresponds to 55–492 (RFSHLVLFFL…FDGVKVSATS (438 aa)). Residues Asn99, Asn196, and Asn314 are each glycosylated (N-linked (GlcNAc...) asparagine). The interval 457 to 492 (IKEAKSNSKPRVSKSKSYKEKQEPKAFDGVKVSATS) is disordered. Positions 473–484 (SYKEKQEPKAFD) are enriched in basic and acidic residues.

It belongs to the glycosyltransferase 43 family. As to expression, expressed in developing interfascicular fibers and xylem cells in stems and developing secondary xylem in roots.

The protein resides in the golgi apparatus membrane. Its function is as follows. Involved in the synthesis of the hemicellulose glucuronoxylan, a major component of secondary cell walls. Probably involved in the elongation of glucuronoxylan xylosyl backbone. The sequence is that of Probable beta-1,4-xylosyltransferase IRX14H (IRX14H) from Arabidopsis thaliana (Mouse-ear cress).